A 138-amino-acid chain; its full sequence is Phospholipase A2 group V (138 aa).

The signal sequence occupies residues M1–G20. Intrachain disulfides connect C46-C137, C48-C64, C63-C117, C70-C110, C79-C103, and C97-C108. The Ca(2+) site is built by Y47, G49, and G51. The active site involves H67. Residue D68 participates in Ca(2+) binding. D111 is an active-site residue.

Belongs to the phospholipase A2 family. Ca(2+) is required as a cofactor. In terms of processing, this enzyme lacks one of the seven disulfide bonds found in similar PLA2 proteins. Heart, placenta and less abundantly, in lung. Detected in the outer and inner plexiform layers of the retina (at protein level). Expressed in monocytes and macrophages.

It localises to the secreted. Its subcellular location is the cell membrane. The protein resides in the cytoplasmic vesicle. The protein localises to the phagosome. It is found in the recycling endosome. It localises to the golgi apparatus. Its subcellular location is the cis-Golgi network. The protein resides in the trans-Golgi network. The enzyme catalyses a 1,2-diacyl-sn-glycero-3-phosphocholine + H2O = a 1-acyl-sn-glycero-3-phosphocholine + a fatty acid + H(+). The catalysed reaction is 1-hexadecanoyl-2-(9Z-octadecenoyl)-sn-glycero-3-phosphocholine + H2O = 1-hexadecanoyl-sn-glycero-3-phosphocholine + (9Z)-octadecenoate + H(+). It catalyses the reaction 1-hexadecanoyl-2-(5Z,8Z,11Z,14Z-eicosatetraenoyl)-sn-glycero-3-phosphocholine + H2O = 1-hexadecanoyl-sn-glycero-3-phosphocholine + (5Z,8Z,11Z,14Z)-eicosatetraenoate + H(+). It carries out the reaction 1-hexadecanoyl-2-(9Z,12Z-octadecadienoyl)-sn-glycero-3-phosphoethanolamine + H2O = 1-hexadecanoyl-sn-glycero-3-phosphoethanolamine + (9Z,12Z)-octadecadienoate + H(+). The enzyme catalyses 1-hexadecanoyl-2-(5Z,8Z,11Z,14Z-eicosatetraenoyl)-sn-glycero-3-phosphoethanolamine + H2O = 1-hexadecanoyl-sn-glycero-3-phosphoethanolamine + (5Z,8Z,11Z,14Z)-eicosatetraenoate + H(+). The catalysed reaction is 1-octadecanoyl-2-(5Z,8Z,11Z,14Z-eicosatetraenoyl)-sn-glycero-3-phospho-(1D-myo-inositol) + H2O = 1-octadecanoyl-sn-glycero-3-phospho-(1D-myo-inositol) + (5Z,8Z,11Z,14Z)-eicosatetraenoate + H(+). It catalyses the reaction 1-hexadecanoyl-2-(9Z-octadecenoyl)-sn-glycero-3-phosphoglycerol + H2O = 1-hexadecanoyl-sn-glycero-3-phosphoglycerol + (9Z)-octadecenoate + H(+). It carries out the reaction N-hexadecanoyl-1,2-di-(9Z-octadecenoyl)-sn-glycero-3-phosphoethanolamine + H2O = N-hexadecanoyl-1-(9Z-octadecenoyl)-sn-glycero-3-phosphoethanolamine + (9Z)-octadecenoate + H(+). The enzyme catalyses 1'-[1,2-di-(9Z-octadecenoyl)-sn-glycero-3-phospho]-3'-[1-(9Z-octadecenoyl)-sn-glycero-3-phospho]-glycerol + H2O = 1',3'-bis-[1-(9Z-octadecenoyl)-sn-glycero-3-phospho]-glycerol + (9Z)-octadecenoate + H(+). The catalysed reaction is 1',3'-bis[1,2-di-(9Z-octadecenoyl)-sn-glycero-3-phospho]-glycerol + H2O = 1'-[1,2-di-(9Z-octadecenoyl)-sn-glycero-3-phospho]-3'-[1-(9Z-octadecenoyl)-sn-glycero-3-phospho]-glycerol + (9Z)-octadecenoate + H(+). Its pathway is lipid metabolism; phospholipid metabolism. The protein operates within lipid metabolism; leukotriene B4 biosynthesis. It participates in lipid metabolism; leukotriene C4 biosynthesis. Its activity is regulated as follows. Activated by cardiolipin. Secretory calcium-dependent phospholipase A2 that primarily targets extracellular phospholipids. Hydrolyzes the ester bond of the fatty acyl group attached at sn-2 position of phospholipids (phospholipase A2 activity), preferentially releasing fatty acyl groups with a low degree of unsaturation such as oleoyl (C18:1) and linoleoyl (C18:2) groups. Hydrolyzes low-density lipoprotein (LDL) phospholipids releasing unsaturated fatty acids that drive macrophage polarization toward an M2 phenotype. May act in an autocrine and paracrine manner. Contributes to lipid remodeling of cellular membranes at different subcellular locations and generation of lipid mediators involved in pathogen clearance. Cleaves sn-2 fatty acyl chains of cardiolipin, a major component of the inner membrane of mitochondria and bacterial membranes. Promotes phagocytosis of bacteria in macrophages through production of lysophosphatidylethanolamines. Displays bactericidal activity against Gram-positive bacteria by directly hydrolyzing phospholipids of the bacterial membrane. Promotes phagocytosis and killing of ingested fungi likely through controlling phagosome-lysosome fusion and phagosome maturation. Plays a role in biosynthesis of cysteinyl leukotrienes (CysLTs) in myeloid cells. In eosinophils, triggers perinuclear arachidonate release and LTC4 synthesis in a PLA2G4A-independent way. In neutrophils, amplifies CysLTs biosynthesis initiated by PLA2G4A. Promotes immune complex clearance in macrophages via stimulating synthesis of CysLTs, which act through CYSLTR1 to trigger phagocytosis. May regulate antigen processing in antigen-presenting cells. In pulmonary macrophages regulates IL33 production required for activation of group 2 innate lymphoid cells. May play a role in the biosynthesis of N-acyl ethanolamines that regulate energy metabolism. Hydrolyzes N-acyl phosphatidylethanolamines to N-acyl lysophosphatidylethanolamines, which are further cleaved by a lysophospholipase D to release N-acyl ethanolamines. In Homo sapiens (Human), this protein is Phospholipase A2 group V (PLA2G5).